The following is a 166-amino-acid chain: Lipoprotein signal peptidase (166 aa).

3 helical membrane-spanning segments follow: residues 12-32, 70-90, and 102-122; these read WLWVVVAVLIIDLGSKFLILQ, WFFSGIAIGICVVLTVLMYRS, and ALIIGGALGNLFDRLWHGFVV. Active-site residues include aspartate 123 and aspartate 141. Residues 137 to 157 traverse the membrane as a helical segment; the sequence is FNLADSAICIGAALIVLEGFL.

It belongs to the peptidase A8 family.

It is found in the cell inner membrane. It catalyses the reaction Release of signal peptides from bacterial membrane prolipoproteins. Hydrolyzes -Xaa-Yaa-Zaa-|-(S,diacylglyceryl)Cys-, in which Xaa is hydrophobic (preferably Leu), and Yaa (Ala or Ser) and Zaa (Gly or Ala) have small, neutral side chains.. Its pathway is protein modification; lipoprotein biosynthesis (signal peptide cleavage). Its function is as follows. This protein specifically catalyzes the removal of signal peptides from prolipoproteins. In Klebsiella pneumoniae (strain 342), this protein is Lipoprotein signal peptidase.